Here is a 581-residue protein sequence, read N- to C-terminus: Sabinene synthase 1, chloroplastic (581 aa).

The N-terminal 28 residues, 1–28, are a transit peptide targeting the chloroplast; that stretch reads MPLNSLHNLERKPSKAWSTSCTAPAARL. (2E)-geranyl diphosphate is bound by residues Arg-297, Asp-334, Asp-338, Arg-475, and Asp-478. Mg(2+) is bound by residues Asp-334 and Asp-338. Residues 334-338 carry the DDXXD motif motif; the sequence is DDVYD. The Mg(2+) site is built by Asp-478, Thr-482, and Glu-486.

This sequence belongs to the terpene synthase family. Tpsb subfamily. Mg(2+) serves as cofactor. Mn(2+) is required as a cofactor.

The protein resides in the plastid. It localises to the chloroplast. It carries out the reaction (2E)-geranyl diphosphate = sabinene + diphosphate. The catalysed reaction is (2E)-geranyl diphosphate = beta-myrcene + diphosphate. It participates in secondary metabolite biosynthesis; terpenoid biosynthesis. Functionally, monoterpene synthase (TPS) involved in the biosynthesis of monoterpene natural products, components of the chemical defense arsenal. Catalyzes the conversion of (2E)-geranyl diphosphate (GPP) into sabinene, and, as minor products, myrcene. This Salvia pomifera (Apple sage) protein is Sabinene synthase 1, chloroplastic.